A 79-amino-acid chain; its full sequence is Antimicrobial peptide ToAP2 (79 aa).

An N-terminal signal peptide occupies residues 1-23 (MQFKKQLLVIFFAYFLVVNESEA). Positions 50–79 (SLMKRELKNLYDPYQRSVEMERLLKELPLY) are excised as a propeptide.

This sequence belongs to the non-disulfide-bridged peptide (NDBP) superfamily. Medium-length antimicrobial peptide (group 3) family. In terms of tissue distribution, expressed by the venom gland.

It localises to the secreted. Its subcellular location is the target cell membrane. Functionally, antimicrobial peptide. Shows antibacterial activity against all M.massiliense bacterial strains tested. Has antifungal activity against Candida spp. and two Cryptococcus neoformans strains with MICs values ranging from 6.25 to 200 uM. Also shows an inhibitory activity on C.albicans biofilms at high concentrations. Exhibits chemotactic activity for monocytes, neutrophils, and eosinophils. Shows low cytotoxic activity and has weak hemolytic activity on human erythrocytes. In vivo, treatment of infected mice with M.massiliense reduces the bacterial load in the liver, lung, and spleen. May act by disrupting the integrity of the bacterial cell membrane. This chain is Antimicrobial peptide ToAP2, found in Tityus obscurus (Amazonian scorpion).